Here is a 359-residue protein sequence, read N- to C-terminus: Protein RecA (359 aa).

77–84 (GPESSGKT) serves as a coordination point for ATP.

It belongs to the RecA family.

The protein resides in the cytoplasm. Functionally, can catalyze the hydrolysis of ATP in the presence of single-stranded DNA, the ATP-dependent uptake of single-stranded DNA by duplex DNA, and the ATP-dependent hybridization of homologous single-stranded DNAs. It interacts with LexA causing its activation and leading to its autocatalytic cleavage. In Paramagnetospirillum magneticum (strain ATCC 700264 / AMB-1) (Magnetospirillum magneticum), this protein is Protein RecA.